A 168-amino-acid polypeptide reads, in one-letter code: Phosphopantetheine adenylyltransferase (168 aa).

S9 is a substrate binding site. ATP-binding positions include S9–F10 and H17. Substrate contacts are provided by K41, L73, and R87. ATP-binding positions include G88–R90, E98, and Y123–S129.

It belongs to the bacterial CoaD family. As to quaternary structure, homohexamer. Requires Mg(2+) as cofactor.

It localises to the cytoplasm. The catalysed reaction is (R)-4'-phosphopantetheine + ATP + H(+) = 3'-dephospho-CoA + diphosphate. It participates in cofactor biosynthesis; coenzyme A biosynthesis; CoA from (R)-pantothenate: step 4/5. Reversibly transfers an adenylyl group from ATP to 4'-phosphopantetheine, yielding dephospho-CoA (dPCoA) and pyrophosphate. This chain is Phosphopantetheine adenylyltransferase, found in Heliobacterium modesticaldum (strain ATCC 51547 / Ice1).